The chain runs to 515 residues: MPVIDVAKSDLERLTGLKYEEIAKLFEYIKGEIESDSGERLRIEVTHDRPDHFSAEGLAKTLKGIAEIEVGLPRISLGRSSIRLVAESITERPYIAMAVVRNVRLDEEAIKQMIQLQEKLHETYGRGRRKIAIGFYDVSKIKPPIYYRRISQEDEYIPLGFQKPVKVREMYELTEQGRRYSGLINRENPPALVDASGQIMVVIPVLGSECCKITEATRDVLIDVTGTDHRAVANALSILIYSLLERSGSKEVEIVEGGTGYSHEYVKIYVDERAVSEFLGVKIAHEDFIKYIKKARFDYQEGAVIIPPYRINVLSWVDVAEDVAIVMGYNQMPREVPEIPSAGRRHRTEVITLEVRKSMLSMGFTELNNYVLTDEAVAEVCSPARVANPISELYTTIRCSIITQLISAASALKRRETKIFEVGEVVREGRTVRALAFLISRDGATLTDGLSVVKSLCKRLGLKCEFFPAEAKWALPNRMAEVRGEITGYIAEVNPDVLTALKHAVPTVVAELYIG.

Residues 263–334 enclose the B5 domain; the sequence is HEYVKIYVDE…IVMGYNQMPR (72 aa). Asn312, Asp318, Glu321, and Asp322 together coordinate Mg(2+).

The protein belongs to the phenylalanyl-tRNA synthetase beta subunit family. Type 2 subfamily. Tetramer of two alpha and two beta subunits. Mg(2+) serves as cofactor.

Its subcellular location is the cytoplasm. The catalysed reaction is tRNA(Phe) + L-phenylalanine + ATP = L-phenylalanyl-tRNA(Phe) + AMP + diphosphate + H(+). This Pyrobaculum aerophilum (strain ATCC 51768 / DSM 7523 / JCM 9630 / CIP 104966 / NBRC 100827 / IM2) protein is Phenylalanine--tRNA ligase beta subunit.